The primary structure comprises 339 residues: Dihydroorotate dehydrogenase (quinone) (339 aa).

Residues 61 to 65 and T85 each bind FMN; that span reads AGLDK. Substrate is bound at residue K65. 110–114 serves as a coordination point for substrate; it reads NRMGF. Positions 138 and 171 each coordinate FMN. Residue N171 participates in substrate binding. S174 functions as the Nucleophile in the catalytic mechanism. N176 is a substrate binding site. FMN-binding residues include K216 and T244. 245 to 246 contributes to the substrate binding site; sequence NT. Residues G267, G296, and 317–318 contribute to the FMN site; that span reads YS.

It belongs to the dihydroorotate dehydrogenase family. Type 2 subfamily. In terms of assembly, monomer. The cofactor is FMN.

The protein localises to the cell membrane. It carries out the reaction (S)-dihydroorotate + a quinone = orotate + a quinol. The protein operates within pyrimidine metabolism; UMP biosynthesis via de novo pathway; orotate from (S)-dihydroorotate (quinone route): step 1/1. Functionally, catalyzes the conversion of dihydroorotate to orotate with quinone as electron acceptor. The polypeptide is Dihydroorotate dehydrogenase (quinone) (Teredinibacter turnerae (strain ATCC 39867 / T7901)).